A 79-amino-acid polypeptide reads, in one-letter code: uncharacterized protein (79 aa).

The signal sequence occupies residues 1-33; that stretch reads MRFIIRTVMLIALVWIGLLLSGYGVLIGSKENA.

This is an uncharacterized protein from Escherichia coli O157:H7.